The following is a 379-amino-acid chain: 3-isopropylmalate dehydrogenase 1 (379 aa).

Substrate contacts are provided by Arg-101, Arg-111, Arg-139, and Asp-230. Mg(2+) is bound by residues Asp-230, Asp-254, and Asp-258. 293–305 provides a ligand contact to NAD(+); that stretch reads GSAPDIAGKGIAN.

This sequence belongs to the isocitrate and isopropylmalate dehydrogenases family. LeuB type 1 subfamily. Homodimer. It depends on Mg(2+) as a cofactor. The cofactor is Mn(2+).

The protein localises to the cytoplasm. It catalyses the reaction (2R,3S)-3-isopropylmalate + NAD(+) = 4-methyl-2-oxopentanoate + CO2 + NADH. It functions in the pathway amino-acid biosynthesis; L-leucine biosynthesis; L-leucine from 3-methyl-2-oxobutanoate: step 3/4. Its function is as follows. Catalyzes the oxidation of 3-carboxy-2-hydroxy-4-methylpentanoate (3-isopropylmalate) to 3-carboxy-4-methyl-2-oxopentanoate. The product decarboxylates to 4-methyl-2 oxopentanoate. The protein is 3-isopropylmalate dehydrogenase 1 of Bradyrhizobium diazoefficiens (strain JCM 10833 / BCRC 13528 / IAM 13628 / NBRC 14792 / USDA 110).